The following is a 3118-amino-acid chain: Laminin subunit alpha-2 (3118 aa).

The signal sequence occupies residues 1 to 19; the sequence is MPAATAGILLLLLLGTLEG. In terms of domain architecture, Laminin N-terminal spans 31–282; that stretch reads QQRGLFPAVL…SVKDISVGGM (252 aa). 2 N-linked (GlcNAc...) asparagine glycosylation sites follow: Asn-51 and Asn-85. Disulfide bonds link Cys-283/Cys-292, Cys-285/Cys-303, Cys-305/Cys-314, Cys-317/Cys-337, Cys-340/Cys-349, and Cys-342/Cys-374. Laminin EGF-like domains follow at residues 283–339, 340–409, 410–464, and 465–513; these read CICY…ECEA, CNCH…PCQP, CHCD…DCQP, and CNCS…GCEE. The N-linked (GlcNAc...) asparagine glycan is linked to Asn-299. 2 N-linked (GlcNAc...) asparagine glycosylation sites follow: Asn-359 and Asn-376. Intrachain disulfides connect Cys-377-Cys-386, Cys-389-Cys-407, Cys-410-Cys-422, Cys-412-Cys-438, Cys-440-Cys-449, Cys-452-Cys-462, Cys-465-Cys-478, Cys-467-Cys-482, Cys-484-Cys-493, and Cys-496-Cys-511. Asn-466 is a glycosylation site (N-linked (GlcNAc...) asparagine). Residues 514 to 523 form the Laminin EGF-like 5; first part domain; it reads CFCSGVSNRC. Residues 527–719 enclose the Laminin IV type A 1 domain; the sequence is YWTYGNIQDM…DRRIATDVEV (193 aa). A Laminin EGF-like 5; second part domain is found at 720–752; it reads CQCPPGYSGSSCETCWPRHRRVNGTIFGGICEP. Asn-742 carries an N-linked (GlcNAc...) asparagine glycan. Cystine bridges form between Cys-753-Cys-762, Cys-755-Cys-769, Cys-772-Cys-781, Cys-784-Cys-800, Cys-803-Cys-818, Cys-805-Cys-828, Cys-831-Cys-840, Cys-843-Cys-858, Cys-861-Cys-875, Cys-863-Cys-882, Cys-885-Cys-894, Cys-897-Cys-911, Cys-914-Cys-926, Cys-916-Cys-933, Cys-935-Cys-944, Cys-947-Cys-960, Cys-963-Cys-975, Cys-965-Cys-981, Cys-983-Cys-992, Cys-995-Cys-1007, Cys-1010-Cys-1019, Cys-1012-Cys-1026, Cys-1028-Cys-1037, Cys-1040-Cys-1053, Cys-1056-Cys-1068, Cys-1058-Cys-1075, Cys-1077-Cys-1086, Cys-1089-Cys-1099, Cys-1102-Cys-1114, Cys-1104-Cys-1130, Cys-1132-Cys-1141, and Cys-1144-Cys-1159. 8 consecutive Laminin EGF-like domains span residues 753–802, 803–860, 861–913, 914–962, 963–1009, 1010–1055, 1056–1101, and 1102–1161; these read CQCF…DCQP, CACP…SCQP, CQCN…NCQP, CRCN…GCLP, CNCN…GCIA, CDCS…GCKV, CNCS…LCTL, and CDCF…GCSS. Residue Asn-919 is glycosylated (N-linked (GlcNAc...) asparagine). N-linked (GlcNAc...) asparagine glycosylation occurs at Asn-1031. Asn-1057 carries an N-linked (GlcNAc...) asparagine glycan. The Laminin EGF-like 14; first part domain maps to 1162–1171; that stretch reads CYCFGVTSQC. The 204-residue stretch at 1172–1375 folds into the Laminin IV type A 2 domain; sequence SEAKGLIRTW…GSPPAHLIER (204 aa). In terms of domain architecture, Laminin EGF-like 14; second part spans 1376 to 1415; that stretch reads CDCPPGYSGLSCETCAPGFYRLRSEPGGRTPGPTLGTCVP. Disulfide bonds link Cys-1378-Cys-1387, Cys-1416-Cys-1425, Cys-1418-Cys-1432, Cys-1435-Cys-1444, Cys-1447-Cys-1462, Cys-1465-Cys-1480, Cys-1467-Cys-1490, Cys-1493-Cys-1502, Cys-1505-Cys-1520, Cys-1523-Cys-1535, Cys-1525-Cys-1542, Cys-1544-Cys-1553, and Cys-1556-Cys-1567. Laminin EGF-like domains lie at 1416-1464, 1465-1522, and 1523-1569; these read CQCN…DCQP, CACP…SCQE, and CECD…ECVF. The interval 1570 to 2140 is domain II and I; the sequence is CGDECTGLLL…NQARKQANSI (571 aa). N-linked (GlcNAc...) asparagine glycosylation is found at Asn-1593, Asn-1610, Asn-1696, Asn-1806, Asn-1897, Asn-1912, Asn-1916, Asn-2013, Asn-2024, Asn-2041, Asn-2122, and Asn-2236. Residues 1662 to 1863 are a coiled coil; it reads QDAERTNSRA…DIKTKLPPMS (202 aa). Positions 1923–2146 form a coiled coil; the sequence is AYSNIKDYID…ANSIKVSVSS (224 aa). 5 Laminin G-like domains span residues 2141–2324, 2336–2517, 2522–2706, 2759–2930, and 2929–3115; these read KVSV…CKGC, TIQF…TKGC, VYTV…IGRC, SKQF…VGTC, and TCFA…PVSC. The cysteines at positions 2298 and 2324 are disulfide-linked. N-linked (GlcNAc...) asparagine glycans are attached at residues Asn-2356, Asn-2431, and Asn-2474. The cysteines at positions 2491 and 2517 are disulfide-linked. N-linked (GlcNAc...) asparagine glycosylation is found at Asn-2547, Asn-2554, and Asn-2644. An intrachain disulfide couples Cys-2679 to Cys-2706. An N-linked (GlcNAc...) asparagine glycan is attached at Asn-2889. Intrachain disulfides connect Cys-2905-Cys-2930 and Cys-3083-Cys-3115.

As to quaternary structure, laminin is a complex glycoprotein, consisting of three different polypeptide chains (alpha, beta, gamma), which are bound to each other by disulfide bonds into a cross-shaped molecule comprising one long and three short arms with globules at each end. Alpha-2 is a subunit of laminin-2 (laminin-211 or merosin), laminin-4 (laminin-221 or S-merosin) and laminin-12 (laminin-213). Interacts with FBLN1, FBLN2 and NID2.

The protein resides in the secreted. It localises to the extracellular space. It is found in the extracellular matrix. Its subcellular location is the basement membrane. Binding to cells via a high affinity receptor, laminin is thought to mediate the attachment, migration and organization of cells into tissues during embryonic development by interacting with other extracellular matrix components. In Mus musculus (Mouse), this protein is Laminin subunit alpha-2 (Lama2).